A 145-amino-acid chain; its full sequence is Protein BUD31 homolog 2 (145 aa).

The protein belongs to the BUD31 (G10) family.

Its subcellular location is the nucleus. The chain is Protein BUD31 homolog 2 from Oryza sativa subsp. japonica (Rice).